Here is a 493-residue protein sequence, read N- to C-terminus: Glutamyl-tRNA(Gln) amidotransferase subunit A (493 aa).

Catalysis depends on charge relay system residues K81 and S156. Residue S180 is the Acyl-ester intermediate of the active site.

This sequence belongs to the amidase family. GatA subfamily. Heterotrimer of A, B and C subunits.

The enzyme catalyses L-glutamyl-tRNA(Gln) + L-glutamine + ATP + H2O = L-glutaminyl-tRNA(Gln) + L-glutamate + ADP + phosphate + H(+). Allows the formation of correctly charged Gln-tRNA(Gln) through the transamidation of misacylated Glu-tRNA(Gln) in organisms which lack glutaminyl-tRNA synthetase. The reaction takes place in the presence of glutamine and ATP through an activated gamma-phospho-Glu-tRNA(Gln). The chain is Glutamyl-tRNA(Gln) amidotransferase subunit A from Mycobacterium avium (strain 104).